The primary structure comprises 221 residues: GFP-like non-fluorescent chromoprotein (221 aa).

Residues 62-64 (QYG) constitute a cross-link (2-iminomethyl-5-imidazolinone (Gln-Gly)). Y63 carries the (E)-2,3-didehydrotyrosine modification.

Belongs to the GFP family. As to quaternary structure, homotetramer. Post-translationally, contains a chromophore consisting of modified amino acid residues. The chromophore is formed by autocatalytic backbone condensation between Xaa-N and Gly-(N+2), oxidation of Tyr-(N+1) to didehydrotyrosine, and formation of a double bond to the alpha-amino nitrogen of residue Xaa-N. Maturation of the chromophore requires nothing other than molecular oxygen.

Functionally, thought to play a role in photoprotection of the coral's resident symbiont microalgae's photosystems from photoinhibition caused by high light levels found near the surface of coral reefs. The sequence is that of GFP-like non-fluorescent chromoprotein from Montipora efflorescens (Pore coral).